Here is a 310-residue protein sequence, read N- to C-terminus: tRNA-cytidine(32) 2-sulfurtransferase (310 aa).

Residues 48 to 53 (SGGKDS) carry the PP-loop motif motif. [4Fe-4S] cluster is bound by residues Cys123, Cys126, and Cys214.

This sequence belongs to the TtcA family. Homodimer. Requires Mg(2+) as cofactor. It depends on [4Fe-4S] cluster as a cofactor.

It localises to the cytoplasm. It carries out the reaction cytidine(32) in tRNA + S-sulfanyl-L-cysteinyl-[cysteine desulfurase] + AH2 + ATP = 2-thiocytidine(32) in tRNA + L-cysteinyl-[cysteine desulfurase] + A + AMP + diphosphate + H(+). It participates in tRNA modification. Catalyzes the ATP-dependent 2-thiolation of cytidine in position 32 of tRNA, to form 2-thiocytidine (s(2)C32). The sulfur atoms are provided by the cysteine/cysteine desulfurase (IscS) system. The polypeptide is tRNA-cytidine(32) 2-sulfurtransferase (Vibrio cholerae serotype O1 (strain ATCC 39315 / El Tor Inaba N16961)).